Consider the following 182-residue polypeptide: Ribosome maturation factor RimP (182 aa).

The protein belongs to the RimP family.

The protein localises to the cytoplasm. Functionally, required for maturation of 30S ribosomal subunits. The protein is Ribosome maturation factor RimP of Chloroherpeton thalassium (strain ATCC 35110 / GB-78).